The primary structure comprises 269 residues: Tryptophan synthase alpha chain (269 aa).

Active-site proton acceptor residues include E49 and D60.

Belongs to the TrpA family. In terms of assembly, tetramer of two alpha and two beta chains.

It catalyses the reaction (1S,2R)-1-C-(indol-3-yl)glycerol 3-phosphate + L-serine = D-glyceraldehyde 3-phosphate + L-tryptophan + H2O. It functions in the pathway amino-acid biosynthesis; L-tryptophan biosynthesis; L-tryptophan from chorismate: step 5/5. The alpha subunit is responsible for the aldol cleavage of indoleglycerol phosphate to indole and glyceraldehyde 3-phosphate. This chain is Tryptophan synthase alpha chain, found in Ectopseudomonas mendocina (strain ymp) (Pseudomonas mendocina).